Consider the following 798-residue polypeptide: Protocadherin beta-13 (798 aa).

The signal sequence occupies residues 1–28; that stretch reads MEASGKLICRQRQVLFSFLLLGLSLAGA. The Extracellular portion of the chain corresponds to 29–690; that stretch reads AEPRSYSVVE…AQADSLTVYL (662 aa). 5 consecutive Cadherin domains span residues 36 to 134, 139 to 243, 248 to 348, 353 to 451, and 456 to 561; these read VVEE…SPVF, MLVK…APEF, YRVQ…APEV, FTSP…APAF, and YTLF…SPFV. Residues Asn-418 and Asn-436 are each glycosylated (N-linked (GlcNAc...) asparagine). N-linked (GlcNAc...) asparagine glycosylation is present at Asn-567. Positions 568–671 constitute a Cadherin 6 domain; the sequence is GSAPCTELVP…LVDGFSQPYL (104 aa). The chain crosses the membrane as a helical span at residues 691-711; that stretch reads VVALASVSSLFLFSVLLFVAV. Residues 712-798 lie on the Cytoplasmic side of the membrane; it reads RLCRRSRAAS…FPNNFGFNIQ (87 aa).

The protein resides in the cell membrane. Functionally, potential calcium-dependent cell-adhesion protein. May be involved in the establishment and maintenance of specific neuronal connections in the brain. The protein is Protocadherin beta-13 (PCDHB13) of Pan troglodytes (Chimpanzee).